Here is a 227-residue protein sequence, read N- to C-terminus: PKHD-type hydroxylase ACICU_00484 (227 aa).

A Fe2OG dioxygenase domain is found at 78 to 178 (DIIPPLFNRY…RIASFFWVQS (101 aa)). His96, Asp98, and His159 together coordinate Fe cation. A 2-oxoglutarate-binding site is contributed by Arg169.

Requires Fe(2+) as cofactor. L-ascorbate serves as cofactor.

The polypeptide is PKHD-type hydroxylase ACICU_00484 (Acinetobacter baumannii (strain ACICU)).